The chain runs to 94 residues: C-C motif chemokine 17 (94 aa).

The signal sequence occupies residues 1–23 (MAPLKMLALVILLLGASLQHIHA). Disulfide bonds link Cys-33–Cys-57 and Cys-34–Cys-73.

The protein belongs to the intercrine beta (chemokine CC) family.

Its subcellular location is the secreted. Functionally, chemokine, which displays chemotactic activity for T lymphocytes, preferentially Th2 cells, but not monocytes or granulocytes. Therefore plays an important role in a wide range of inflammatory and immunological processes. Acts by binding to CCR4 at T-cell surface. Mediates GM-CSF/CSF2-driven pain and inflammation. In the brain, required to maintain the typical, highly branched morphology of hippocampal microglia under homeostatic conditions. May be important for the appropriate adaptation of microglial morphology and synaptic plasticity to acute lipopolysaccharide (LPS)-induced neuroinflammation. Plays a role in wound healing, mainly by inducing fibroblast migration into the wound. The polypeptide is C-C motif chemokine 17 (CCL17) (Macaca mulatta (Rhesus macaque)).